We begin with the raw amino-acid sequence, 174 residues long: uncharacterized protein (174 aa).

A helical transmembrane segment spans residues 126 to 146; the sequence is AIDEFIITVIPVVLGSGIPLF.

It to B.subtilis YyaP.

It localises to the membrane. This is an uncharacterized protein from Bacillus subtilis (strain 168).